The sequence spans 355 residues: Isopentenyl-diphosphate delta-isomerase (355 aa).

A substrate-binding site is contributed by 12–13; that stretch reads RK. FMN-binding positions include serine 70, 71–73, serine 101, and asparagine 130; that span reads SMT. 101–103 contacts substrate; sequence SMR. Glutamine 165 is a binding site for substrate. Glutamate 166 serves as a coordination point for Mg(2+). Residues lysine 197 and 308–309 each bind FMN; that span reads AG.

The protein belongs to the IPP isomerase type 2 family. Homooctamer. Dimer of tetramers. FMN is required as a cofactor. The cofactor is NADPH. Requires Mg(2+) as cofactor.

Its subcellular location is the cytoplasm. It carries out the reaction isopentenyl diphosphate = dimethylallyl diphosphate. Functionally, involved in the biosynthesis of isoprenoids. Catalyzes the 1,3-allylic rearrangement of the homoallylic substrate isopentenyl (IPP) to its allylic isomer, dimethylallyl diphosphate (DMAPP). The sequence is that of Isopentenyl-diphosphate delta-isomerase from Chlorobium phaeovibrioides (strain DSM 265 / 1930) (Prosthecochloris vibrioformis (strain DSM 265)).